A 341-amino-acid chain; its full sequence is L-threonine 3-dehydrogenase (341 aa).

A Zn(2+)-binding site is contributed by C38. Active-site charge relay system residues include T40 and H43. Residues H63, E64, C93, C96, C99, and C107 each coordinate Zn(2+). NAD(+) is bound by residues I175, D195, R200, 262-264, and 286-287; these read LGI and IY.

It belongs to the zinc-containing alcohol dehydrogenase family. As to quaternary structure, homotetramer. Requires Zn(2+) as cofactor.

It is found in the cytoplasm. The enzyme catalyses L-threonine + NAD(+) = (2S)-2-amino-3-oxobutanoate + NADH + H(+). It functions in the pathway amino-acid degradation; L-threonine degradation via oxydo-reductase pathway; glycine from L-threonine: step 1/2. In terms of biological role, catalyzes the NAD(+)-dependent oxidation of L-threonine to 2-amino-3-ketobutyrate. The protein is L-threonine 3-dehydrogenase of Shigella boydii serotype 4 (strain Sb227).